Reading from the N-terminus, the 317-residue chain is MPIHLECMSHTPLHGYFDPAPAVVAEVERVQRAARERVDAFDPELVIVFAPDHYNGFFYDVMPQFCIGASATAVGDFGSAAGPLPVARDAALALADAALASDIDVAVSYRMQVDHGCAQALEVLTGRIDRFPVVPVFINSVAPPMASCRRARLLGDAIGRVVARMNRRVLLIGSGGISHEPPVPEIAGADDVVAERLIAGRNPSPASRDARQSSTVAAARAFAAGDSRLHPLNPAWDRRFLELLERGDLTAADGLTNEAITRDAGKSAHEIRTWVAAFGALAASGPYAASIDYYRAIPEWIAGFGAMHARERTLSRR.

His115 (proton donor) is an active-site residue. His179 serves as the catalytic Proton acceptor.

This sequence belongs to the LigB/MhpB extradiol dioxygenase family. In terms of assembly, homotetramer. It depends on Fe(2+) as a cofactor.

The catalysed reaction is 3-(2,3-dihydroxyphenyl)propanoate + O2 = (2Z,4E)-2-hydroxy-6-oxonona-2,4-dienedioate + H(+). It catalyses the reaction (2E)-3-(2,3-dihydroxyphenyl)prop-2-enoate + O2 = (2Z,4E,7E)-2-hydroxy-6-oxonona-2,4,7-trienedioate + H(+). Its pathway is aromatic compound metabolism; 3-phenylpropanoate degradation. Functionally, catalyzes the non-heme iron(II)-dependent oxidative cleavage of 2,3-dihydroxyphenylpropionic acid and 2,3-dihydroxicinnamic acid into 2-hydroxy-6-ketononadienedioate and 2-hydroxy-6-ketononatrienedioate, respectively. In Burkholderia vietnamiensis (strain G4 / LMG 22486) (Burkholderia cepacia (strain R1808)), this protein is 2,3-dihydroxyphenylpropionate/2,3-dihydroxicinnamic acid 1,2-dioxygenase.